A 703-amino-acid polypeptide reads, in one-letter code: Ion-translocating oxidoreductase complex subunit C (703 aa).

4Fe-4S ferredoxin-type domains follow at residues 368–397 (MAPQ…QQLY) and 407–436 (KARN…VQYY). [4Fe-4S] cluster-binding residues include Cys377, Cys380, Cys383, Cys387, Cys416, Cys419, Cys422, and Cys426. Disordered regions lie at residues 505-558 (AVPA…EDPR) and 653-674 (AQQA…EEDP). Positions 524-539 (AAREARKAQARERRAQ) are enriched in basic and acidic residues.

Belongs to the 4Fe4S bacterial-type ferredoxin family. RnfC subfamily. As to quaternary structure, the complex is composed of six subunits: RnfA, RnfB, RnfC, RnfD, RnfE and RnfG. [4Fe-4S] cluster serves as cofactor.

The protein resides in the cell inner membrane. Functionally, part of a membrane-bound complex that couples electron transfer with translocation of ions across the membrane. The sequence is that of Ion-translocating oxidoreductase complex subunit C from Serratia proteamaculans (strain 568).